The following is a 63-amino-acid chain: Small ribosomal subunit protein uS14 (63 aa).

Zn(2+) contacts are provided by cysteine 26, cysteine 29, cysteine 42, and cysteine 45.

This sequence belongs to the universal ribosomal protein uS14 family. Zinc-binding uS14 subfamily. In terms of assembly, part of the 30S ribosomal subunit. Contacts proteins S3 and S10. Zn(2+) is required as a cofactor.

Binds 16S rRNA, required for the assembly of 30S particles and may also be responsible for determining the conformation of the 16S rRNA at the A site. The chain is Small ribosomal subunit protein uS14 from Gloeobacter violaceus (strain ATCC 29082 / PCC 7421).